A 472-amino-acid polypeptide reads, in one-letter code: Tail hub protein gp10 (472 aa).

Monomer (in solution). Hexamer; assembles as a hexamer onto the dodecamer formed by the head-to-tail adapter gp4. Interacts with the head-to-tail adapter protein gp4; each gp10 monomer contacts 2 head-to-tail adapter protein gp4. Interacts with the tail needle protein gp26. Interacts with the tail spike protein gp9; binds six tail spike trimers.

It localises to the virion. Its function is as follows. Acts as a tail hub by assembling onto the head-to-tail adapter protein gp4, generating a channel that is sealed by the tail needle protein gp26. Together with gp4 and gp26, gp10 is required for stabilization of the condensed DNA within the capsid; perhaps by plugging the hole through which the DNA enters. The chain is Tail hub protein gp10 (10) from Salmonella phage P22 (Bacteriophage P22).